The sequence spans 154 residues: Large ribosomal subunit protein uL30 (154 aa).

This sequence belongs to the universal ribosomal protein uL30 family. In terms of assembly, part of the 50S ribosomal subunit.

This is Large ribosomal subunit protein uL30 from Methanoregula boonei (strain DSM 21154 / JCM 14090 / 6A8).